The chain runs to 425 residues: Cyanogenic beta-glucosidase (425 aa).

The N-terminal stretch at Leu1 to Ala11 is a signal peptide. A beta-D-glucoside-binding positions include Gln44, His148, and Asn193–Glu194. Glu194 serves as the catalytic Proton donor. Cys213 and Cys221 are oxidised to a cystine. Asn220 is a glycosylation site (N-linked (GlcNAc...) asparagine). Tyr337 and Glu408 together coordinate a beta-D-glucoside. Glu408 serves as the catalytic Nucleophile. N-linked (GlcNAc...) asparagine glycosylation occurs at Asn412.

The protein belongs to the glycosyl hydrolase 1 family. Homodimer. Leaves.

It carries out the reaction Hydrolysis of terminal, non-reducing beta-D-glucosyl residues with release of beta-D-glucose.. Functionally, hydrolyzes cyanoglucosides, contributing to the release of hydrocyanic acid, which functions as a defense mechanism against small predators, when the leaf tissue is damaged. The sequence is that of Cyanogenic beta-glucosidase (LI) from Trifolium repens (Creeping white clover).